A 156-amino-acid polypeptide reads, in one-letter code: Ribosomal RNA large subunit methyltransferase H (156 aa).

S-adenosyl-L-methionine contacts are provided by residues Leu-72, Gly-104, and 123–128 (FGAMVW).

The protein belongs to the RNA methyltransferase RlmH family. In terms of assembly, homodimer.

The protein localises to the cytoplasm. The catalysed reaction is pseudouridine(1915) in 23S rRNA + S-adenosyl-L-methionine = N(3)-methylpseudouridine(1915) in 23S rRNA + S-adenosyl-L-homocysteine + H(+). Functionally, specifically methylates the pseudouridine at position 1915 (m3Psi1915) in 23S rRNA. In Dinoroseobacter shibae (strain DSM 16493 / NCIMB 14021 / DFL 12), this protein is Ribosomal RNA large subunit methyltransferase H.